Reading from the N-terminus, the 782-residue chain is General transcription and DNA repair factor IIH helicase/translocase subunit XPB (782 aa).

Over residues 1–11 the composition is skewed to basic and acidic residues; the sequence is MGKRDRADRDK. Disordered regions lie at residues 1–51 and 220–240; these read MGKR…ESGT and ISKTAEGSGGPSTSRVTDPQG. The Nuclear localization signal motif lies at 6–18; that stretch reads RADRDKKKSRKRH. Residues 21-30 show a composition bias toward acidic residues; it reads DEEDDEEDAP. In terms of domain architecture, Helicase ATP-binding spans 327–488; the sequence is MFGNGRARSG…DLNFLIGPKL (162 aa). 340 to 347 serves as a coordination point for ATP; sequence LPCGAGKS. Positions 441-444 match the DEVH box motif; that stretch reads DEVH. The Helicase C-terminal domain occupies 542–702; the sequence is RACQFLIKFH…LAGMEEEDLA (161 aa). Ser-686 bears the Phosphoserine mark. A Phosphoserine; by CK2 modification is found at Ser-751.

Belongs to the helicase family. RAD25/XPB subfamily. In terms of assembly, component of the 7-subunit TFIIH core complex composed of XPB/ERCC3, XPD/ERCC2, GTF2H1, GTF2H2, GTF2H3, GTF2H4 and GTF2H5, which is active in NER. The core complex associates with the 3-subunit CDK-activating kinase (CAK) module composed of CCNH/cyclin H, CDK7 and MNAT1 to form the 10-subunit holoenzyme (holo-TFIIH) active in transcription. Interacts with PUF60. Interacts with ATF7IP. Interacts with KAT2A; leading to KAT2A recruitment to promoters and acetylation of histones. Part of TBP-based Pol II pre-initiation complex (PIC), in which Pol II core assembles with general transcription factors and other specific initiation factors including GTF2E1, GTF2E2, GTF2F1, GTF2F2, TCEA1, ERCC2, ERCC3, GTF2H2, GTF2H3, GTF2H4, GTF2H5, GTF2A1, GTF2A2, GTF2B and TBP; this large multi-subunit PIC complex mediates DNA unwinding and targets Pol II core to the transcription start site where the first phosphodiester bond forms. In terms of processing, phosphorylation on Ser-751 by CK2 controls the 5'-excision activity of ERCC1-XPF endonuclease; phosphorylated protein inhibits the excision activity and thus NER. Dephosphorylation reactivates the 5'-excision step. Phosphorylation has no effect on transcription or the 3'-5' helicase activity.

The protein resides in the nucleus. The catalysed reaction is Couples ATP hydrolysis with the unwinding of duplex DNA by translocating in the 3'-5' direction.. It catalyses the reaction ATP + H2O = ADP + phosphate + H(+). Phosphorylation on Ser-751 by CK2 controls the 5'-excision activity of ERCC1-XPF endonuclease; phosphorylated protein inhibits the excision activity and thus NER. ATPase activity is stimulated by TFIIH subunit p52 (GTF2H4). DNA translocase activity by this subunit in TFIIH is stimulated by XPA, ERCC5/XPG and XFP plus ERCC1. ATP-dependent 3'-5' DNA helicase/translocase; binds dsDNA rather than ssDNA, unzipping it in a translocase rather than classical helicase activity. Component of the general transcription and DNA repair factor IIH (TFIIH) core complex. When complexed to CDK-activating kinase (CAK), involved in RNA transcription by RNA polymerase II. The ATPase activity of XPB/ERCC3, but not its helicase activity, is required for DNA opening; it may wrap around the damaged DNA wedging it open, causing localized melting and twisting that allows XPD/ERCC2 helicase to anchor. The ATP-dependent helicase activity of XPB/ERCC3 may be required for promoter escape. Also involved in transcription-coupled nucleotide excision repair (NER) of damaged DNA. In NER, TFIIH acts by opening DNA around the lesion to allow the excision of the damaged oligonucleotide and its replacement by a new DNA fragment. The structure of the TFIIH transcription complex differs from the NER-TFIIH complex; large movements by XPD/ERCC2 and XPB/ERCC3 are stabilized by XPA. The protein is General transcription and DNA repair factor IIH helicase/translocase subunit XPB (ERCC3) of Macaca fascicularis (Crab-eating macaque).